We begin with the raw amino-acid sequence, 256 residues long: Hydroxyacylglutathione hydrolase (256 aa).

Zn(2+) contacts are provided by His-53, His-55, Asp-57, His-58, His-113, Asp-130, and His-168.

It belongs to the metallo-beta-lactamase superfamily. Glyoxalase II family. Monomer. Zn(2+) serves as cofactor.

The enzyme catalyses an S-(2-hydroxyacyl)glutathione + H2O = a 2-hydroxy carboxylate + glutathione + H(+). It functions in the pathway secondary metabolite metabolism; methylglyoxal degradation; (R)-lactate from methylglyoxal: step 2/2. Thiolesterase that catalyzes the hydrolysis of S-D-lactoyl-glutathione to form glutathione and D-lactic acid. This chain is Hydroxyacylglutathione hydrolase, found in Tolumonas auensis (strain DSM 9187 / NBRC 110442 / TA 4).